We begin with the raw amino-acid sequence, 525 residues long: Light-independent protochlorophyllide reductase subunit B (525 aa).

Aspartate 36 is a [4Fe-4S] cluster binding site. Aspartate 290 serves as the catalytic Proton donor. 425-426 (GL) lines the substrate pocket.

This sequence belongs to the ChlB/BchB/BchZ family. Protochlorophyllide reductase is composed of three subunits; ChlL, ChlN and ChlB. Forms a heterotetramer of two ChlB and two ChlN subunits. [4Fe-4S] cluster serves as cofactor.

It carries out the reaction chlorophyllide a + oxidized 2[4Fe-4S]-[ferredoxin] + 2 ADP + 2 phosphate = protochlorophyllide a + reduced 2[4Fe-4S]-[ferredoxin] + 2 ATP + 2 H2O. The protein operates within porphyrin-containing compound metabolism; chlorophyll biosynthesis (light-independent). Component of the dark-operative protochlorophyllide reductase (DPOR) that uses Mg-ATP and reduced ferredoxin to reduce ring D of protochlorophyllide (Pchlide) to form chlorophyllide a (Chlide). This reaction is light-independent. The NB-protein (ChlN-ChlB) is the catalytic component of the complex. The polypeptide is Light-independent protochlorophyllide reductase subunit B (Prochlorococcus marinus (strain MIT 9312)).